Here is a 77-residue protein sequence, read N- to C-terminus: Cysteine-rich protein 1 (77 aa).

Residues 2 to 63 (PKCPKCNKEV…HPCYAAMFGP (62 aa)) enclose the LIM zinc-binding domain. Residues Lys-9 and Lys-22 each carry the N6-acetyllysine modification. Arg-68 carries the post-translational modification Omega-N-methylarginine.

In terms of biological role, seems to have a role in zinc absorption and may function as an intracellular zinc transport protein. This Homo sapiens (Human) protein is Cysteine-rich protein 1 (CRIP1).